The following is a 279-amino-acid chain: Putative ABC transporter ATP-binding protein GSU3001 (279 aa).

An ABC transporter domain is found at 1 to 237; that stretch reads MRFSVDLKAY…PAEMESVKLR (237 aa). Residue 36–43 participates in ATP binding; sequence GSNGSGKT.

Belongs to the ABC transporter superfamily.

It localises to the cell inner membrane. Functionally, probably part of an ABC transporter complex. Responsible for energy coupling to the transport system. The polypeptide is Putative ABC transporter ATP-binding protein GSU3001 (Geobacter sulfurreducens (strain ATCC 51573 / DSM 12127 / PCA)).